We begin with the raw amino-acid sequence, 156 residues long: Cyanate hydratase (156 aa).

Residues Arg96, Glu99, and Ser122 contribute to the active site.

The protein belongs to the cyanase family.

The enzyme catalyses cyanate + hydrogencarbonate + 3 H(+) = NH4(+) + 2 CO2. Catalyzes the reaction of cyanate with bicarbonate to produce ammonia and carbon dioxide. In Pseudomonas entomophila (strain L48), this protein is Cyanate hydratase.